Here is a 212-residue protein sequence, read N- to C-terminus: Riboflavin synthase (212 aa).

Lumazine-binding repeat units lie at residues 1–97 (MFTG…VGGH) and 98–195 (LVSG…VDSV). 2,4-dihydroxypteridine is bound by residues 4-6 (GIV), 48-50 (CLT), 62-67 (DIVEET), 101-103 (GHI), lysine 137, 146-148 (SLT), and 160-165 (FLIPET).

In terms of assembly, homotrimer.

The catalysed reaction is 2 6,7-dimethyl-8-(1-D-ribityl)lumazine + H(+) = 5-amino-6-(D-ribitylamino)uracil + riboflavin. It participates in cofactor biosynthesis; riboflavin biosynthesis; riboflavin from 2-hydroxy-3-oxobutyl phosphate and 5-amino-6-(D-ribitylamino)uracil: step 2/2. Catalyzes the dismutation of two molecules of 6,7-dimethyl-8-ribityllumazine, resulting in the formation of riboflavin and 5-amino-6-(D-ribitylamino)uracil. The polypeptide is Riboflavin synthase (ribE) (Buchnera aphidicola subsp. Baizongia pistaciae (strain Bp)).